The primary structure comprises 223 residues: Putative germin-like protein 2-3 (223 aa).

An N-terminal signal peptide occupies residues 1-28 (MAAIRASFLLAAAALLALWCSDHGGVVA). Cysteines 38 and 53 form a disulfide. The 151-residue stretch at 67-217 (SGLHMAGNTT…AFQVEKTVVD (151 aa)) folds into the Cupin type-1 domain. Residue N74 is glycosylated (N-linked (GlcNAc...) asparagine). Mn(2+) is bound by residues H115, H117, E122, and H163.

This sequence belongs to the germin family. As to quaternary structure, oligomer (believed to be a pentamer but probably hexamer).

It is found in the secreted. It localises to the extracellular space. Its subcellular location is the apoplast. Its function is as follows. May play a role in plant defense. Probably has no oxalate oxidase activity even if the active site is conserved. The chain is Putative germin-like protein 2-3 from Oryza sativa subsp. japonica (Rice).